Reading from the N-terminus, the 309-residue chain is Elongator complex protein 5 (309 aa).

Ser-3 and Ser-4 each carry phosphoserine.

It belongs to the ELP5 family. In terms of assembly, component of the elongator complex, which consists of ELP1/IKI3, ELP2, ELP3, ELP4, ELP5/IKI1 and ELP6. The elongator complex is composed of two copies of the Elp123 subcomplex (composed of ELP1/IKI3, ELP2 and ELP3) and two copies of the Elp456 subcomplex (composed of ELP4, ELP5/IKI1 and ELP6). The Elp123 subcomplex forms a two-lobed scaffold, which binds the Elp456 subcomplex asymmetrically. In each lobe, ELP2 is tightly sandwiched between ELP1/IKI3 and ELP3. The Elp123 subcomplex binds tRNA through ELP1/IKI3 and ELP3 and can bind 2 tRNAs simultaneously. tRNA-binding by the Elp123 subcomplex induces conformational rearrangements which precisely position the targeted anticodon base in the active site. The Elp456 subcomplex binds tRNA and has ATPase activity. Interacts with KTI11/DPH3.

It is found in the cytoplasm. The protein localises to the nucleus. The protein operates within tRNA modification; 5-methoxycarbonylmethyl-2-thiouridine-tRNA biosynthesis. Component of the elongator complex which is required for multiple tRNA modifications, including mcm5U (5-methoxycarbonylmethyl uridine), mcm5s2U (5-methoxycarbonylmethyl-2-thiouridine), and ncm5U (5-carbamoylmethyl uridine). The elongator complex catalyzes formation of carboxymethyluridine in the wobble base at position 34 in tRNAs. It functions as a gamma-toxin target (TOT); disruption of the complex confers resistance to Kluyveromyces lactis toxin zymocin (pGKL1 killer toxin). May also be involved in sensitivity to Pichia inositovora toxin. This Saccharomyces cerevisiae (strain ATCC 204508 / S288c) (Baker's yeast) protein is Elongator complex protein 5 (IKI1).